Consider the following 448-residue polypeptide: MKHRYLPMTEQDQKEMLDVIGVSSVDELFEDIPEKVRFKGLYDIKAAKSESALLKELTALAAKNKDTNANVSFLGAGVYNHYKPVIVDHVISRSEFYTAYTPYQPEISQGELQAIFEFQTMIAELTGMDLANSSMYDGGTALAEAGMLAAGHTRRKKILVSETVHPEYRDVVATYAYGQSIEIVTIPHKDGVTDIAALKELIDDNTAAVIAQYPNFFGQVEDIQVIGDIAHEAKSLFVVSSNPLALGILTPPGKLGADICVGDAQVFGISEAFGGPHCGFFAVTTKLMRKVPGRLVGETVDGEGRRGYVLTLQAREQHIRRDKATSNICSNQALLALAASVAMTALGKQGIREMATQNIAKTRYAKNAFEAAGFTVAFQGAHFNEIVVKTNKCVKEINKGLIEKGIIGGYPLGQNYDSLKHHVLIAVTELRTKEEIDALVAEMGALHA.

This sequence belongs to the GcvP family. N-terminal subunit subfamily. In terms of assembly, the glycine cleavage system is composed of four proteins: P, T, L and H. In this organism, the P 'protein' is a heterodimer of two subunits.

It carries out the reaction N(6)-[(R)-lipoyl]-L-lysyl-[glycine-cleavage complex H protein] + glycine + H(+) = N(6)-[(R)-S(8)-aminomethyldihydrolipoyl]-L-lysyl-[glycine-cleavage complex H protein] + CO2. Functionally, the glycine cleavage system catalyzes the degradation of glycine. The P protein binds the alpha-amino group of glycine through its pyridoxal phosphate cofactor; CO(2) is released and the remaining methylamine moiety is then transferred to the lipoamide cofactor of the H protein. This is Probable glycine dehydrogenase (decarboxylating) subunit 1 from Lysinibacillus sphaericus (strain C3-41).